The following is a 304-amino-acid chain: UTP--glucose-1-phosphate uridylyltransferase 1 (304 aa).

Belongs to the UDPGP type 2 family.

The catalysed reaction is alpha-D-glucose 1-phosphate + UTP + H(+) = UDP-alpha-D-glucose + diphosphate. It participates in carbohydrate metabolism; nucleotide-sugar metabolism. This Streptococcus pyogenes serotype M18 (strain MGAS8232) protein is UTP--glucose-1-phosphate uridylyltransferase 1 (hasC1).